The sequence spans 1609 residues: Factor-induced gene 2 protein (1609 aa).

The N-terminal stretch at 1–22 is a signal peptide; sequence MNSFASLGLIYSVVNLLTRVEA. A glycan (N-linked (GlcNAc...) asparagine) is linked at Asn29. Disordered regions lie at residues 129 to 165, 196 to 243, and 266 to 312; these read SSTLSSTAQPHRTSHSSSSFELPVTAPSSSSLPSSTS, SSEI…EPLS, and TIPT…NYDV. Positions 137-148 are enriched in polar residues; that stretch reads QPHRTSHSSSSF. Over residues 150 to 165 the composition is skewed to low complexity; that stretch reads LPVTAPSSSSLPSSTS. A compositionally biased stretch (polar residues) spans 196–212; sequence SSEISGSTSPKSLESFD. Low complexity-rich tracts occupy residues 213–243 and 274–285; these read TTGTITSSYSPSPSSKNSNQTSLLSPLEPLS and TSSLPPTLRSSS. The N-linked (GlcNAc...) asparagine glycan is linked to Asn231. Over residues 286–312 the composition is skewed to polar residues; sequence MAPTSGSDSISHNFTSPPSKTSGNYDV. Asn298, Asn347, Asn386, Asn426, Asn495, Asn535, Asn661, Asn674, and Asn713 each carry an N-linked (GlcNAc...) asparagine glycan. The interval 846 to 876 is disordered; the sequence is ATSEATSTSTQVSATSATATASESSTTSQVS. N-linked (GlcNAc...) asparagine glycans are attached at residues Asn889, Asn907, and Asn1079. Positions 1231-1243 are enriched in polar residues; that stretch reads CTQDVPTQSSSPA. The disordered stretch occupies residues 1231 to 1259; that stretch reads CTQDVPTQSSSPASTLAYSPSVSTSSSSS. The span at 1244 to 1259 shows a compositional bias: low complexity; sequence STLAYSPSVSTSSSSS. N-linked (GlcNAc...) asparagine glycosylation is present at Asn1400. The GPI-anchor amidated glycine moiety is linked to residue Gly1588. Residues 1589–1609 constitute a propeptide, removed in mature form; that stretch reads SASKFLCSKFFMIMVMVINFI.

Post-translationally, N-glycosylated.

The protein resides in the secreted. The protein localises to the cell wall. It is found in the membrane. Required for efficient mating. Plays a role in maintenance of cell wall integrity during mating. Important for mating cell projection shape and conjugation bridge diameter. Plays a role in cell fusion and nuclear migration. The protein is Factor-induced gene 2 protein (FIG2) of Saccharomyces cerevisiae (strain ATCC 204508 / S288c) (Baker's yeast).